Reading from the N-terminus, the 516-residue chain is Delta(24)-sterol reductase (516 aa).

An N-terminal signal peptide occupies residues 1-22; that stretch reads MEPAVSLAVCALLFLLWVRVKG. At 23-31 the chain is on the lumenal side; sequence LEFVLIHQR. Residues 32-52 form a helical membrane-spanning segment; sequence WVFVCLFLLPLSLIFDIYYYV. Topologically, residues 53–516 are cytoplasmic; the sequence is RAWVVFKLSS…YDKICKAARH (464 aa). Residues 58-234 enclose the FAD-binding PCMH-type domain; sequence FKLSSAPRLH…VAAEIRIIPA (177 aa). 163–175 lines the FAD pocket; the sequence is TVGGLIMGTGIES.

This sequence belongs to the FAD-binding oxidoreductase/transferase type 4 family. In terms of assembly, interacts with DHCR7; this interaction regulates DHCR7 activity. It depends on FAD as a cofactor.

The protein localises to the endoplasmic reticulum membrane. It is found in the golgi apparatus membrane. It carries out the reaction cholesterol + NADP(+) = desmosterol + NADPH + H(+). The catalysed reaction is lanosterol + NADPH + H(+) = 24,25-dihydrolanosterol + NADP(+). It catalyses the reaction 5alpha-cholest-8-en-3beta-ol + NADP(+) = zymosterol + NADPH + H(+). It participates in steroid biosynthesis; cholesterol biosynthesis. Its function is as follows. Catalyzes the reduction of the delta-24 double bond of sterol intermediates during cholesterol biosynthesis. In addition to its cholesterol-synthesizing activity, can protect cells from oxidative stress by reducing caspase 3 activity during apoptosis induced by oxidative stress. Also protects against amyloid-beta peptide-induced apoptosis. The chain is Delta(24)-sterol reductase (Dhcr24) from Rattus norvegicus (Rat).